We begin with the raw amino-acid sequence, 572 residues long: Formate--tetrahydrofolate ligase (572 aa).

Residue 65–72 (TPLGEGKT) participates in ATP binding.

This sequence belongs to the formate--tetrahydrofolate ligase family.

The catalysed reaction is (6S)-5,6,7,8-tetrahydrofolate + formate + ATP = (6R)-10-formyltetrahydrofolate + ADP + phosphate. The protein operates within one-carbon metabolism; tetrahydrofolate interconversion. The protein is Formate--tetrahydrofolate ligase of Chloroflexus aurantiacus (strain ATCC 29366 / DSM 635 / J-10-fl).